Here is a 535-residue protein sequence, read N- to C-terminus: Zinc transporter ZIP5 (535 aa).

An N-terminal signal peptide occupies residues 1–19; the sequence is MGPPVHHLLTGLCVGVALG. Topologically, residues 20–210 are extracellular; the sequence is WVGGSVPNLG…PAPPGDVLSA (191 aa). N-linked (GlcNAc...) asparagine glycans are attached at residues Asn-49 and Asn-158. Residues 211–231 traverse the membrane as a helical segment; sequence LLHSGLAVLFLSLPAPLSLLL. At 232-242 the chain is on the cytoplasmic side; it reads LRLLGPRLLRP. A helical transmembrane segment spans residues 243 to 263; the sequence is VLGFLGALAVGTLCGDALLHL. Topologically, residues 264–285 are extracellular; the sequence is LPHAQGGRHTGPSEQSEEDLGP. A helical transmembrane segment spans residues 286 to 306; it reads GLSVLGGLFLLFMLENTLGLV. Over 307–439 the chain is Cytoplasmic; it reads RHRGLRPRCC…LLQEGLSFRK (133 aa). Residues 316 to 373 form a disordered region; the sequence is CRNKRDLGEPNPDPEDGSGMVLRPLQAASEPEVQGQRENRQSSPSLAPPGHQGHSHEH. Ser-333 is modified (phosphoserine). Pros-methylhistidine is present on His-371. A helical membrane pass occupies residues 440 to 460; it reads LLLLSLVSGALGLGGAALGVG. Topologically, residues 461-465 are extracellular; that stretch reads LSLGP. A helical membrane pass occupies residues 466–486; it reads VPLTPWVFGTTAGVFLYVALV. Residues 487–503 are Cytoplasmic-facing; that stretch reads DMLPTLLRPPEPLPVFH. The chain crosses the membrane as a helical span at residues 504-524; the sequence is VLLQGLGLLLGGSLMFTIALL. At 525 to 535 the chain is on the extracellular side; the sequence is EEQLVPTVPDG.

The protein belongs to the ZIP transporter (TC 2.A.5) family. In terms of assembly, homodimer. N-Glycosylated. In terms of processing, methylated at His-371 by METTL9. As to expression, expressed in all stages of eye development and primarily in the sclera and several layers of the retina, including the inner segment, outer plexiform layer and ganglion cell layer. Expressed in pancreas, kidney and the proximal and distal small intestine as well as in the embryonic visceral yolk sac. In the proximal intestine, expression is predominant in the crypts but diminishes toward the apical regions of the villi.

It is found in the basolateral cell membrane. It catalyses the reaction Zn(2+)(in) = Zn(2+)(out). Its function is as follows. Uniporter that transports zinc(2+) into polarized cells of enterocytes, pancreatic acinar and endoderm cells across the basolateral membrane and participates, notably, in zinc excretion from the intestine by the uptake of zinc from the blood into the intestine. The transport mechanism is temperature- and concentration-dependent and saturable. In addition, is also a high affinity copper transporter in vitro. Also may regulate glucose-stimulated insulin secretion (GSIS) in islets primarily through the zinc-activated SIRT1-PPARGC1A axis. Could regulate the BMP/TGF-beta (bone morphogenetic protein/transforming growth factor-beta) signaling pathway and modulates extracellular matrix (ECM) proteins of the sclera. Plays a role in eye development. This Mus musculus (Mouse) protein is Zinc transporter ZIP5.